A 490-amino-acid polypeptide reads, in one-letter code: Protein lag-3 (490 aa).

Disordered regions lie at residues 18–55 (PSVAGMKPSTSKTTHSPPPEEPTAPFVNDNLPNPEDEP), 105–155 (EDEE…PTSE), 213–235 (SSADSIRSVPTPASSMHQPSPAE), 307–362 (SSSE…MQRI), and 391–490 (QQQQ…ANIN). Positions 105 to 119 (EDEERKRVEQQKNKE) are enriched in basic and acidic residues. The span at 122–138 (NASTSAPTSSRNGGQSV) shows a compositional bias: polar residues. Residues 307–318 (SSSESPTKQSPM) show a composition bias toward polar residues. Composition is skewed to low complexity over residues 341-359 (QLQQQQNKMRLMQQQQQEM), 391-404 (QQQQQQQMQQHHQM), and 413-456 (QAHQ…HHQM).

In terms of assembly, component of a complex consisting of at least a lin-12/Notch intracellular domain (NICD), lag-1, and lag-3. Interacts with a NICD of lin-12/Notch or glp-1/Notch; the interactions are direct. In terms of tissue distribution, expressed in the progenitor zone and the early pachytene region of the hermaphrodite gonad.

It localises to the nucleus. Functionally, glp-1/Notch and lin-12/Notch proteins promote signaling by recruiting lag-3 to target promoters, where it functions as a transcriptional activator, probably as part of a complex with a Notch intracellular domain (NICD) and the transcription regulator lag-1. Involved in the p53-mediated germ-cell apoptotic response to DNA damage, perhaps acting as a transcriptional activator. May regulate phosphatase lip-1 mRNA transcription downstream of glp-1. In Caenorhabditis elegans, this protein is Protein lag-3 (sel-8).